A 471-amino-acid chain; its full sequence is Chitobiosyldiphosphodolichol beta-mannosyltransferase (471 aa).

The Lumenal portion of the chain corresponds to 1–31 (MDTSSVTMHTERACCHQAQRAVAAMLDKAPS). A helical transmembrane segment spans residues 32–52 (WLIWTAVLYVGLPFMLYWAVP). The Cytoplasmic portion of the chain corresponds to 53 to 126 (YLFYHNKTKS…ALPGASNAGK (74 aa)). An intramembrane region (helical) is located at residues 127-147 (SLGQTARKVVLQTCHIVRQLW). The Cytoplasmic segment spans residues 148–471 (ELRGCDYILI…MSELQVVRQS (324 aa)).

This sequence belongs to the glycosyltransferase group 1 family.

The protein resides in the endoplasmic reticulum membrane. The enzyme catalyses an N,N'-diacetylchitobiosyl-diphospho-di-trans,poly-cis-dolichol + GDP-alpha-D-mannose = a beta-D-Man-(1-&gt;4)-beta-D-GlcNAc-(1-&gt;4)-alpha-D-GlcNAc-diphospho-di-trans,poly-cis-dolichol + GDP + H(+). It functions in the pathway protein modification; protein glycosylation. Participates in the formation of the lipid-linked precursor oligosaccharide for N-glycosylation. Involved in assembling the dolichol-pyrophosphate-GlcNAc(2)-Man(5) intermediate on the cytoplasmic surface of the ER. This chain is Chitobiosyldiphosphodolichol beta-mannosyltransferase (ALG1), found in Eremothecium gossypii (strain ATCC 10895 / CBS 109.51 / FGSC 9923 / NRRL Y-1056) (Yeast).